The sequence spans 136 residues: Ribonuclease P protein component (136 aa).

A disordered region spans residues 116–136; that stretch reads RPQRAAAKGSAGTTQKGTPRA. Residues 126–136 are compositionally biased toward polar residues; the sequence is AGTTQKGTPRA.

This sequence belongs to the RnpA family. As to quaternary structure, consists of a catalytic RNA component (M1 or rnpB) and a protein subunit.

The enzyme catalyses Endonucleolytic cleavage of RNA, removing 5'-extranucleotides from tRNA precursor.. RNaseP catalyzes the removal of the 5'-leader sequence from pre-tRNA to produce the mature 5'-terminus. It can also cleave other RNA substrates such as 4.5S RNA. The protein component plays an auxiliary but essential role in vivo by binding to the 5'-leader sequence and broadening the substrate specificity of the ribozyme. In Pseudarthrobacter chlorophenolicus (strain ATCC 700700 / DSM 12829 / CIP 107037 / JCM 12360 / KCTC 9906 / NCIMB 13794 / A6) (Arthrobacter chlorophenolicus), this protein is Ribonuclease P protein component.